A 451-amino-acid polypeptide reads, in one-letter code: Phosphoglucosamine mutase (451 aa).

The Phosphoserine intermediate role is filled by Ser-101. Positions 101, 240, 242, and 244 each coordinate Mg(2+). Ser-101 carries the phosphoserine modification.

This sequence belongs to the phosphohexose mutase family. It depends on Mg(2+) as a cofactor. Post-translationally, activated by phosphorylation.

It catalyses the reaction alpha-D-glucosamine 1-phosphate = D-glucosamine 6-phosphate. In terms of biological role, catalyzes the conversion of glucosamine-6-phosphate to glucosamine-1-phosphate. The protein is Phosphoglucosamine mutase of Alkalilimnicola ehrlichii (strain ATCC BAA-1101 / DSM 17681 / MLHE-1).